Consider the following 431-residue polypeptide: Cyclic GMP-AMP synthase-like receptor (431 aa).

Residues Ser-73 and Glu-85–Asp-87 each bind ATP. Glu-85, Asp-87, and Asp-212 together coordinate Mg(2+). GTP is bound at residue Asp-212. ATP contacts are provided by residues Lys-290 and Ser-304–Lys-308. Glu-316 is a binding site for Mn(2+).

This sequence belongs to the mab-21 family. Mg(2+) is required as a cofactor. It depends on Mn(2+) as a cofactor.

The enzyme catalyses GTP + ATP = 2',3'-cGAMP + 2 diphosphate. The catalysed reaction is GTP + ATP = pppGp(2'-5')A + diphosphate. It catalyses the reaction pppGp(2'-5')A = 2',3'-cGAMP + diphosphate. Nucleotidyltransferase that catalyzes the formation of cyclic GMP-AMP (2',3'-cGAMP) from ATP and GTP and plays a key role in innate immunity. Acts as a key sensor of double-stranded RNA (dsRNA), the presence of dsRNA in the cytoplasm being a danger signal that triggers the immune responses. Directly binds dsRNA, activating the nucleotidyltransferase activity, leading to synthesis of 2',3'-cGAMP, a second messenger that binds to and activates Sting, thereby triggering the immune response via activation of the NF-kappa-B transcription factor. The protein is Cyclic GMP-AMP synthase-like receptor of Frankliniella occidentalis (Western flower thrips).